Here is a 101-residue protein sequence, read N- to C-terminus: Large ribosomal subunit protein uL23 (101 aa).

It belongs to the universal ribosomal protein uL23 family. In terms of assembly, part of the 50S ribosomal subunit. Contacts protein L29, and trigger factor when it is bound to the ribosome.

Functionally, one of the early assembly proteins it binds 23S rRNA. One of the proteins that surrounds the polypeptide exit tunnel on the outside of the ribosome. Forms the main docking site for trigger factor binding to the ribosome. The sequence is that of Large ribosomal subunit protein uL23 from Synechocystis sp. (strain ATCC 27184 / PCC 6803 / Kazusa).